We begin with the raw amino-acid sequence, 433 residues long: Trigger factor (433 aa).

The PPIase FKBP-type domain maps to 163–248; it reads GDTVNIDFSG…VNEIKFKEVP (86 aa).

This sequence belongs to the FKBP-type PPIase family. Tig subfamily.

The protein localises to the cytoplasm. It catalyses the reaction [protein]-peptidylproline (omega=180) = [protein]-peptidylproline (omega=0). In terms of biological role, involved in protein export. Acts as a chaperone by maintaining the newly synthesized protein in an open conformation. Functions as a peptidyl-prolyl cis-trans isomerase. The chain is Trigger factor from Staphylococcus aureus (strain bovine RF122 / ET3-1).